A 102-amino-acid chain; its full sequence is Large ribosomal subunit protein uL24c (102 aa).

The protein belongs to the universal ribosomal protein uL24 family. Part of the 50S ribosomal subunit.

The protein localises to the plastid. It is found in the chloroplast. In terms of biological role, one of two assembly initiator proteins, it binds directly to the 5'-end of the 23S rRNA, where it nucleates assembly of the 50S subunit. This Rhodomonas salina (Cryptomonas salina) protein is Large ribosomal subunit protein uL24c (rpl24).